The sequence spans 99 residues: Ferredoxin, heterocyst (99 aa).

Residues 4 to 96 (YQVRLINKKQ…NCTIKTHQEP (93 aa)) enclose the 2Fe-2S ferredoxin-type domain. Residues Cys42, Cys47, Cys50, and Cys80 each coordinate [2Fe-2S] cluster.

It belongs to the 2Fe2S plant-type ferredoxin family. [2Fe-2S] cluster serves as cofactor.

Ferredoxins are iron-sulfur proteins that transfer electrons in a wide variety of metabolic reactions. Donates electrons to the nitrogenase. This Nostoc sp. (strain PCC 7120 / SAG 25.82 / UTEX 2576) protein is Ferredoxin, heterocyst (fdxH).